The following is a 232-amino-acid chain: Large ribosomal subunit protein uL1 (232 aa).

Belongs to the universal ribosomal protein uL1 family. Part of the 50S ribosomal subunit.

Functionally, binds directly to 23S rRNA. The L1 stalk is quite mobile in the ribosome, and is involved in E site tRNA release. Protein L1 is also a translational repressor protein, it controls the translation of the L11 operon by binding to its mRNA. This chain is Large ribosomal subunit protein uL1, found in Bordetella bronchiseptica (strain ATCC BAA-588 / NCTC 13252 / RB50) (Alcaligenes bronchisepticus).